The primary structure comprises 453 residues: Verruculogen prenyltransferase (453 aa).

E89 contributes to the substrate binding site. Dimethylallyl diphosphate contacts are provided by R102, K194, Y196, K273, Y275, Y378, Y443, and Y447.

It belongs to the tryptophan dimethylallyltransferase family.

The catalysed reaction is verruculogen + dimethylallyl diphosphate = fumitremorgin A + diphosphate. The protein operates within mycotoxin biosynthesis. Verruculogen prenyltransferase; part of the gene cluster that mediates the biosynthesis of fumitremorgins, indole alkaloids that carry not only intriguing chemical structures, but also interesting biological and pharmacological activities. The biosynthesis of fumitremorgin-type alkaloids begins by condensation of the two amino acids L-tryptophan and L-proline to brevianamide F, catalyzed by the non-ribosomal peptide synthetase ftmPS/ftmA. Brevianamide F is then prenylated by the prenyltransferase ftmPT1/ftmB in the presence of dimethylallyl diphosphate, resulting in the formation of tryprostatin B. The three cytochrome P450 monooxygenases, ftmP450-1/ftmC, ftmP450-2/ftmE and ftmP450-3/FtmG, are responsible for the conversion of tryprostatin B to 6-hydroxytryprostatin B, tryprostatin A to fumitremorgin C and fumitremorgin C to 12,13-dihydroxyfumitremorgin C, respectively. The putative methyltransferase ftmMT/ftmD is expected for the conversion of 6-hydroxytryprostatin B to tryprostatin A. FtmPT2/FtmH catalyzes the prenylation of 12,13-dihydroxyfumitre-morgin C in the presence of dimethylallyl diphosphate, resulting in the formation of fumitremorgin B. Fumitremorgin B is further converted to verruculogen by ftmOx1/ftmF via the insertion of an endoperoxide bond between the two prenyl moieties. Finally, verruculogen is further converted to fumitremorgin A by the verruculogen prenyltransferase ftmPT3. The sequence is that of Verruculogen prenyltransferase from Neosartorya fischeri (strain ATCC 1020 / DSM 3700 / CBS 544.65 / FGSC A1164 / JCM 1740 / NRRL 181 / WB 181) (Aspergillus fischerianus).